A 243-amino-acid chain; its full sequence is tRNA (guanine-N(1)-)-methyltransferase (243 aa).

Residues Gly108 and 127-132 (LGDFVL) contribute to the S-adenosyl-L-methionine site.

Belongs to the RNA methyltransferase TrmD family. Homodimer.

The protein resides in the cytoplasm. The catalysed reaction is guanosine(37) in tRNA + S-adenosyl-L-methionine = N(1)-methylguanosine(37) in tRNA + S-adenosyl-L-homocysteine + H(+). In terms of biological role, specifically methylates guanosine-37 in various tRNAs. This is tRNA (guanine-N(1)-)-methyltransferase from Streptococcus pyogenes serotype M5 (strain Manfredo).